We begin with the raw amino-acid sequence, 330 residues long: ADP-L-glycero-D-manno-heptose-6-epimerase (330 aa).

Residues 11–12, 32–33, Lys39, Lys54, 75–79, and Asn92 contribute to the NADP(+) site; these read FI, DN, and EGACS. The Proton acceptor role is filled by Tyr139. Lys143 contacts NADP(+). Asn168 contacts substrate. Residues Val169 and Lys177 each contribute to the NADP(+) site. Lys177 (proton acceptor) is an active-site residue. Residues Arg179, His186, 200-203, Arg213, and Tyr292 contribute to the substrate site; that span reads FGEY.

The protein belongs to the NAD(P)-dependent epimerase/dehydratase family. HldD subfamily. In terms of assembly, homopentamer. It depends on NADP(+) as a cofactor.

The catalysed reaction is ADP-D-glycero-beta-D-manno-heptose = ADP-L-glycero-beta-D-manno-heptose. The protein operates within nucleotide-sugar biosynthesis; ADP-L-glycero-beta-D-manno-heptose biosynthesis; ADP-L-glycero-beta-D-manno-heptose from D-glycero-beta-D-manno-heptose 7-phosphate: step 4/4. In terms of biological role, catalyzes the interconversion between ADP-D-glycero-beta-D-manno-heptose and ADP-L-glycero-beta-D-manno-heptose via an epimerization at carbon 6 of the heptose. This Paraburkholderia phymatum (strain DSM 17167 / CIP 108236 / LMG 21445 / STM815) (Burkholderia phymatum) protein is ADP-L-glycero-D-manno-heptose-6-epimerase.